The sequence spans 469 residues: Probable Xaa-Pro aminopeptidase AN0832 (469 aa).

4 residues coordinate Mn(2+): aspartate 260, aspartate 271, glutamate 398, and glutamate 437.

The protein belongs to the peptidase M24B family. It depends on Mn(2+) as a cofactor.

It carries out the reaction Release of any N-terminal amino acid, including proline, that is linked to proline, even from a dipeptide or tripeptide.. Its function is as follows. Catalyzes the removal of a penultimate prolyl residue from the N-termini of peptides. The protein is Probable Xaa-Pro aminopeptidase AN0832 of Emericella nidulans (strain FGSC A4 / ATCC 38163 / CBS 112.46 / NRRL 194 / M139) (Aspergillus nidulans).